A 160-amino-acid chain; its full sequence is Protransforming growth factor alpha (160 aa).

A signal peptide spans Met1 to Leu23. A propeptide spans Glu24–Ala39 (removed in mature form). Residues Glu24–Gln98 are Extracellular-facing. Asn25 carries N-linked (GlcNAc...) asparagine glycosylation. In terms of domain architecture, EGF-like spans His43–Glu83. 3 cysteine pairs are disulfide-bonded: Cys47-Cys60, Cys55-Cys71, and Cys73-Cys82. A propeptide spans Val90 to Val160 (removed in mature form). The helical transmembrane segment at Ala99–Cys124 threads the bilayer. Over Gln125–Val160 the chain is Cytoplasmic. 2 S-palmitoyl cysteine lipidation sites follow: Cys153 and Cys154.

As to quaternary structure, interacts with the PDZ domains of MAGI3, SDCBP and SNTA1. The interaction with SDCBP, is required for the targeting to the cell surface. In the endoplasmic reticulum, in its immature form (i.e. with a prosegment and lacking full N-glycosylation), interacts with CNIH. In the Golgi apparatus, may form a complex with CNIH and GORASP2. Interacts (via cytoplasmic C-terminal domain) with NKD2.

Its subcellular location is the secreted. It localises to the extracellular space. The protein localises to the cell membrane. Its function is as follows. TGF alpha is a mitogenic polypeptide that is able to bind to the EGF receptor/EGFR and to act synergistically with TGF beta to promote anchorage-independent cell proliferation in soft agar. The polypeptide is Protransforming growth factor alpha (TGFA) (Sus scrofa (Pig)).